We begin with the raw amino-acid sequence, 137 residues long: Acyl carrier protein 4, chloroplastic (137 aa).

The N-terminal 48 residues, M1–S48, are a transit peptide targeting the chloroplast. The 76-residue stretch at A53 to V128 folds into the Carrier domain. S88 is subject to O-(pantetheine 4'-phosphoryl)serine.

It belongs to the acyl carrier protein (ACP) family. In terms of processing, 4'-phosphopantetheine is transferred from CoA to a specific serine of apo-ACP by acpS. This modification is essential for activity because fatty acids are bound in thioester linkage to the sulfhydryl of the prosthetic group.

The protein resides in the plastid. It localises to the chloroplast. In terms of biological role, carrier of the growing fatty acid chain in fatty acid biosynthesis that plays a major role in the biosynthesis of fatty acids in leaves. Required for the biosynthesis of chloroplast photosynthetic membrane lipids such as monogalactosyldiacylglycerol, digalactosyldiacylglycerol and phosphatidylglycerol. Is essential for the biosynthesis of the cuticular wax and cutin polymers in leaves, and for the establishment of systemic acquired resistance (SAR). This is Acyl carrier protein 4, chloroplastic (ACP4) from Arabidopsis thaliana (Mouse-ear cress).